Here is a 541-residue protein sequence, read N- to C-terminus: Chaperonin GroEL (541 aa).

ATP is bound by residues 29–32 (TLGP), 86–90 (DGTTT), Gly-413, 476–478 (NAA), and Asp-492. Residues 521–541 (KPEENAPAAPAAPNPGMGGMM) form a disordered region. Positions 525 to 535 (NAPAAPAAPNP) are enriched in low complexity.

Belongs to the chaperonin (HSP60) family. Forms a cylinder of 14 subunits composed of two heptameric rings stacked back-to-back. Interacts with the co-chaperonin GroES.

Its subcellular location is the cytoplasm. The catalysed reaction is ATP + H2O + a folded polypeptide = ADP + phosphate + an unfolded polypeptide.. Its function is as follows. Together with its co-chaperonin GroES, plays an essential role in assisting protein folding. The GroEL-GroES system forms a nano-cage that allows encapsulation of the non-native substrate proteins and provides a physical environment optimized to promote and accelerate protein folding. This Lactiplantibacillus plantarum (strain ATCC BAA-793 / NCIMB 8826 / WCFS1) (Lactobacillus plantarum) protein is Chaperonin GroEL.